The primary structure comprises 139 residues: 2S seed storage albumin protein (139 aa).

Residues 1 to 15 (AALLVALLFVANAAA) form the signal peptide. IgE-binding stretches follow at residues 16–30 (FRTT…EDID), 29–34 (IDNPRR), 64–78 (GYDE…RQCC), 65–73 (YDEDNQRQH), 95–103 (QVVRRQQQQ), 99–111 (RQQQ…GEEM), 102–114 (QQQG…MEEM), 105–117 (GLRG…MVQS), 112–126 (EEMV…NECG), 125–136 (CGISSQRCEIRR), and 125–139 (CGIS…RSWF). Propeptides lie at residues 16–31 (FRTT…DIDN) and 58–71 (QQSR…DNQR). 4 cysteine pairs are disulfide-bonded: Cys-39/Cys-88, Cys-52/Cys-77, Cys-78/Cys-125, and Cys-90/Cys-132. The immunodominant epitope. IgE-binding; binds to IgE in 75% of the 20 walnut-allergic patients tested stretch occupies residues 104–115 (QGLRGEEMEEMV). The tract at residues 107-110 (RGEE) is minimally required for IgE-binding by the immunodominant epitope. The propeptide occupies 136–139 (RSWF).

This sequence belongs to the 2S seed storage albumins family. The mature protein consists of a small chain and a large chain linked by disulfide bonds. Expressed in seed (at protein level). Expressed in the peel of mature seed.

Functionally, seed storage protein. The chain is 2S seed storage albumin protein from Juglans regia (English walnut).